We begin with the raw amino-acid sequence, 250 residues long: 2,3-bisphosphoglycerate-dependent phosphoglycerate mutase (250 aa).

Substrate-binding positions include 10-17 (RHGESQWN), 23-24 (TG), R62, 89-92 (ERHY), K100, 116-117 (RR), and 185-186 (GN). Catalysis depends on H11, which acts as the Tele-phosphohistidine intermediate. The Proton donor/acceptor role is filled by E89.

It belongs to the phosphoglycerate mutase family. BPG-dependent PGAM subfamily. In terms of assembly, homodimer.

The enzyme catalyses (2R)-2-phosphoglycerate = (2R)-3-phosphoglycerate. It participates in carbohydrate degradation; glycolysis; pyruvate from D-glyceraldehyde 3-phosphate: step 3/5. Catalyzes the interconversion of 2-phosphoglycerate and 3-phosphoglycerate. This Serratia proteamaculans (strain 568) protein is 2,3-bisphosphoglycerate-dependent phosphoglycerate mutase.